Consider the following 968-residue polypeptide: Serine/threonine-protein kinase apg-1 (968 aa).

The 306-residue stretch at 24-329 folds into the Protein kinase domain; sequence FVIDQEIGKG…FEDLFNHPVV (306 aa). Residues 30–38 and Lys53 contribute to the ATP site; that span reads IGKGSFAKV. Residue Asp167 is the Proton acceptor of the active site. Disordered stretches follow at residues 334-500, 528-585, 884-906, and 939-968; these read PGLV…ERAA, MYPQ…LGTS, LPKR…LSDE, and ASKA…SVPA. Basic and acidic residues-rich tracts occupy residues 350 to 361, 371 to 380, and 417 to 431; these read LKEERPVSRAED, LRKDLADREG, and PRED…KEAA. Composition is skewed to polar residues over residues 441–452, 528–538, and 545–557; these read VQPSTSAPTRPS, MYPQQPQSPKS, and ATQQ…TSGA.

Belongs to the protein kinase superfamily. Ser/Thr protein kinase family. APG1/unc-51/ULK1 subfamily. In terms of assembly, homodimer. Forms a ternary complex with ATG13 and ATG17.

Its subcellular location is the cytoplasm. The protein localises to the preautophagosomal structure membrane. The enzyme catalyses L-seryl-[protein] + ATP = O-phospho-L-seryl-[protein] + ADP + H(+). It carries out the reaction L-threonyl-[protein] + ATP = O-phospho-L-threonyl-[protein] + ADP + H(+). In terms of biological role, serine/threonine protein kinase involved in the cytoplasm to vacuole transport (Cvt) and found to be essential in autophagy, where it is required for the formation of autophagosomes. Involved in the clearance of protein aggregates which cannot be efficiently cleared by the proteasome. Required for selective autophagic degradation of the nucleus (nucleophagy) as well as for mitophagy which contributes to regulate mitochondrial quantity and quality by eliminating the mitochondria to a basal level to fulfill cellular energy requirements and preventing excess ROS production. Also involved in endoplasmic reticulum-specific autophagic process, in selective removal of ER-associated degradation (ERAD) substrates. Plays a key role in ATG9 and ATG23 cycling through the pre-autophagosomal structure and is necessary to promote ATG18 binding to ATG9 through phosphorylation of ATG9. Catalyzes phosphorylation of ATG4, decreasing the interaction between ATG4 and ATG8 and impairing deconjugation of PE-conjugated forms of ATG8. This Neurospora crassa (strain ATCC 24698 / 74-OR23-1A / CBS 708.71 / DSM 1257 / FGSC 987) protein is Serine/threonine-protein kinase apg-1.